Consider the following 594-residue polypeptide: A-type ATP synthase subunit A (594 aa).

236–243 (GPFGSGKT) serves as a coordination point for ATP.

This sequence belongs to the ATPase alpha/beta chains family. In terms of assembly, has multiple subunits with at least A(3), B(3), C, D, E, F, H, I and proteolipid K(x).

Its subcellular location is the cell membrane. It carries out the reaction ATP + H2O + 4 H(+)(in) = ADP + phosphate + 5 H(+)(out). Its function is as follows. Component of the A-type ATP synthase that produces ATP from ADP in the presence of a proton gradient across the membrane. The A chain is the catalytic subunit. This is A-type ATP synthase subunit A from Pyrobaculum calidifontis (strain DSM 21063 / JCM 11548 / VA1).